The following is a 101-amino-acid chain: MAKKSAVARENKRRKLVEANYKKRSELRKIAKSLTASEEEKENARVALNKMKRDTAPIRLHNRCLLTGRPRGYLRKFAISRICFRQMASMGEIPGVVKASW.

The protein belongs to the universal ribosomal protein uS14 family. Part of the 30S ribosomal subunit. Contacts proteins S3 and S10.

In terms of biological role, binds 16S rRNA, required for the assembly of 30S particles and may also be responsible for determining the conformation of the 16S rRNA at the A site. The protein is Small ribosomal subunit protein uS14 of Chlamydia abortus (strain DSM 27085 / S26/3) (Chlamydophila abortus).